The following is a 585-amino-acid chain: Pyruvate kinase (585 aa).

Arginine 32 is a binding site for substrate. K(+)-binding residues include asparagine 34, serine 36, aspartate 66, and threonine 67. 34–37 (NFSH) provides a ligand contact to ATP. ATP contacts are provided by arginine 73 and lysine 156. Mg(2+) is bound at residue glutamate 221. 3 residues coordinate substrate: glycine 244, aspartate 245, and threonine 277. Aspartate 245 contacts Mg(2+).

This sequence belongs to the pyruvate kinase family. The protein in the C-terminal section; belongs to the PEP-utilizing enzyme family. Mg(2+) serves as cofactor. Requires K(+) as cofactor.

The catalysed reaction is pyruvate + ATP = phosphoenolpyruvate + ADP + H(+). It participates in carbohydrate degradation; glycolysis; pyruvate from D-glyceraldehyde 3-phosphate: step 5/5. In Staphylococcus aureus (strain USA300), this protein is Pyruvate kinase (pyk).